Reading from the N-terminus, the 101-residue chain is Protein Tat (101 aa).

The interaction with human CREBBP stretch occupies residues 1–24; that stretch reads MEPVDPNLEPWKHPGSQPRTACTN. A transactivation region spans residues 1-48; the sequence is MEPVDPNLEPWKHPGSQPRTACTNCYCKKCCFHCQVCFITKGLGISYG. Residues C22, C25, and C27 each contribute to the Zn(2+) site. A cysteine-rich region spans residues 22–37; the sequence is CTNCYCKKCCFHCQVC. Residue K28 is modified to N6-acetyllysine; by host PCAF. The Zn(2+) site is built by C30, H33, C34, and C37. The segment at 38–48 is core; it reads FITKGLGISYG. The disordered stretch occupies residues 48 to 101; that stretch reads GRKKRRQRQRAPDSSQNHQDSLSKQPSSQPRGDPTGPKESKKEVERETETDPLD. The short motif at 49 to 57 is the Nuclear localization signal, RNA-binding (TAR), and protein transduction element; sequence RKKRRQRQR. The tract at residues 49–86 is interaction with the host capping enzyme RNGTT; sequence RKKRRQRQRAPDSSQNHQDSLSKQPSSQPRGDPTGPKE. Residues K50 and K51 each carry the N6-acetyllysine; by host EP300 and GCN5L2 modification. R52 and R53 each carry asymmetric dimethylarginine; by host PRMT6. The span at 59-77 shows a compositional bias: polar residues; sequence PDSSQNHQDSLSKQPSSQP. Residue K71 forms a Glycyl lysine isopeptide (Lys-Gly) (interchain with G-Cter in ubiquitin) linkage. Positions 78 to 80 match the Cell attachment site motif; sequence RGD. Residues 83 to 101 show a composition bias toward basic and acidic residues; it reads GPKESKKEVERETETDPLD.

The protein belongs to the lentiviruses Tat family. In terms of assembly, interacts with host CCNT1. Associates with the P-TEFb complex composed at least of Tat, P-TEFb (CDK9 and CCNT1), TAR RNA, RNA Pol II. Recruits the HATs CREBBP, TAF1/TFIID, EP300, PCAF and GCN5L2. Interacts with host KAT5/Tip60; this interaction targets the latter to degradation. Interacts with the host deacetylase SIRT1. Interacts with host capping enzyme RNGTT; this interaction stimulates RNGTT. Binds to host KDR, and to the host integrins ITGAV/ITGB3 and ITGA5/ITGB1. Interacts with host KPNB1/importin beta-1 without previous binding to KPNA1/importin alpha-1. Interacts with EIF2AK2. Interacts with host nucleosome assembly protein NAP1L1; this interaction may be required for the transport of Tat within the nucleus, since the two proteins interact at the nuclear rim. Interacts with host C1QBP/SF2P32; this interaction involves lysine-acetylated Tat. Interacts with the host chemokine receptors CCR2, CCR3 and CXCR4. Interacts with host DPP4/CD26; this interaction may trigger an anti-proliferative effect. Interacts with host LDLR. Interacts with the host extracellular matrix metalloproteinase MMP1. Interacts with host PRMT6; this interaction mediates Tat's methylation. Interacts with, and is ubiquitinated by MDM2/Hdm2. Interacts with host PSMC3 and HTATIP2. Interacts with STAB1; this interaction may overcome SATB1-mediated repression of IL2 and IL2RA (interleukin) in T cells by binding to the same domain than HDAC1. Interacts (when acetylated) with human CDK13, thereby increasing HIV-1 mRNA splicing and promoting the production of the doubly spliced HIV-1 protein Nef. Interacts with host TBP; this interaction modulates the activity of transcriptional pre-initiation complex. Interacts with host RELA. Interacts with host PLSCR1; this interaction negatively regulates Tat transactivation activity by altering its subcellular distribution. Post-translationally, asymmetrical arginine methylation by host PRMT6 seems to diminish the transactivation capacity of Tat and affects the interaction with host CCNT1. In terms of processing, acetylation by EP300, CREBBP, GCN5L2/GCN5 and PCAF regulates the transactivation activity of Tat. EP300-mediated acetylation of Lys-50 promotes dissociation of Tat from the TAR RNA through the competitive binding to PCAF's bromodomain. In addition, the non-acetylated Tat's N-terminus can also interact with PCAF. PCAF-mediated acetylation of Lys-28 enhances Tat's binding to CCNT1. Lys-50 is deacetylated by SIRT1. Polyubiquitination by host MDM2 does not target Tat to degradation, but activates its transactivation function and fosters interaction with CCNT1 and TAR RNA. Post-translationally, phosphorylated by EIF2AK2 on serine and threonine residues adjacent to the basic region important for TAR RNA binding and function. Phosphorylation of Tat by EIF2AK2 is dependent on the prior activation of EIF2AK2 by dsRNA.

It is found in the host nucleus. The protein resides in the host nucleolus. It localises to the host cytoplasm. The protein localises to the secreted. Functionally, transcriptional activator that increases RNA Pol II processivity, thereby increasing the level of full-length viral transcripts. Recognizes a hairpin structure at the 5'-LTR of the nascent viral mRNAs referred to as the transactivation responsive RNA element (TAR) and recruits the cyclin T1-CDK9 complex (P-TEFb complex) that will in turn hyperphosphorylate the RNA polymerase II to allow efficient elongation. The CDK9 component of P-TEFb and other Tat-activated kinases hyperphosphorylate the C-terminus of RNA Pol II that becomes stabilized and much more processive. Other factors such as HTATSF1/Tat-SF1, SUPT5H/SPT5, and HTATIP2 are also important for Tat's function. Besides its effect on RNA Pol II processivity, Tat induces chromatin remodeling of proviral genes by recruiting the histone acetyltransferases (HATs) CREBBP, EP300 and PCAF to the chromatin. This also contributes to the increase in proviral transcription rate, especially when the provirus integrates in transcriptionally silent region of the host genome. To ensure maximal activation of the LTR, Tat mediates nuclear translocation of NF-kappa-B by interacting with host RELA. Through its interaction with host TBP, Tat may also modulate transcription initiation. Tat can reactivate a latently infected cell by penetrating in it and transactivating its LTR promoter. In the cytoplasm, Tat is thought to act as a translational activator of HIV-1 mRNAs. Extracellular circulating Tat can be endocytosed by surrounding uninfected cells via the binding to several surface receptors such as CD26, CXCR4, heparan sulfate proteoglycans (HSPG) or LDLR. Neurons are rarely infected, but they internalize Tat via their LDLR. Through its interaction with nuclear HATs, Tat is potentially able to control the acetylation-dependent cellular gene expression. Modulates the expression of many cellular genes involved in cell survival, proliferation or in coding for cytokines or cytokine receptors. Tat plays a role in T-cell and neurons apoptosis. Tat induced neurotoxicity and apoptosis probably contribute to neuroAIDS. Circulating Tat also acts as a chemokine-like and/or growth factor-like molecule that binds to specific receptors on the surface of the cells, affecting many cellular pathways. In the vascular system, Tat binds to ITGAV/ITGB3 and ITGA5/ITGB1 integrins dimers at the surface of endothelial cells and competes with bFGF for heparin-binding sites, leading to an excess of soluble bFGF. The polypeptide is Protein Tat (Human immunodeficiency virus type 1 group M subtype B (isolate SF33) (HIV-1)).